The sequence spans 509 residues: UDP-N-acetylmuramoyl-L-alanyl-D-glutamate--2,6-diaminopimelate ligase (509 aa).

Ser-32 lines the UDP-N-acetyl-alpha-D-muramoyl-L-alanyl-D-glutamate pocket. Gly-117–Thr-123 provides a ligand contact to ATP. Residues Thr-159–Thr-160, Ser-186, Gln-192, and Arg-194 each bind UDP-N-acetyl-alpha-D-muramoyl-L-alanyl-D-glutamate. Lys-226 carries the post-translational modification N6-carboxylysine. Residues Arg-401, Asp-425–Arg-428, Gly-476, and Glu-480 each bind meso-2,6-diaminopimelate. Positions Asp-425–Arg-428 match the Meso-diaminopimelate recognition motif motif.

Belongs to the MurCDEF family. MurE subfamily. Requires Mg(2+) as cofactor. Post-translationally, carboxylation is probably crucial for Mg(2+) binding and, consequently, for the gamma-phosphate positioning of ATP.

The protein resides in the cytoplasm. It catalyses the reaction UDP-N-acetyl-alpha-D-muramoyl-L-alanyl-D-glutamate + meso-2,6-diaminopimelate + ATP = UDP-N-acetyl-alpha-D-muramoyl-L-alanyl-gamma-D-glutamyl-meso-2,6-diaminopimelate + ADP + phosphate + H(+). Its pathway is cell wall biogenesis; peptidoglycan biosynthesis. In terms of biological role, catalyzes the addition of meso-diaminopimelic acid to the nucleotide precursor UDP-N-acetylmuramoyl-L-alanyl-D-glutamate (UMAG) in the biosynthesis of bacterial cell-wall peptidoglycan. The protein is UDP-N-acetylmuramoyl-L-alanyl-D-glutamate--2,6-diaminopimelate ligase of Prochlorococcus marinus (strain NATL2A).